Here is a 351-residue protein sequence, read N- to C-terminus: Serine/threonine-protein kinase mos (351 aa).

The region spanning 71-340 is the Protein kinase domain; it reads FSIDGVIGSG…ERRTDDTENL (270 aa). Residues 77-85 and K98 contribute to the ATP site; that span reads IGSGGFGSV. D194 (proton acceptor) is an active-site residue.

This sequence belongs to the protein kinase superfamily. Ser/Thr protein kinase family.

It carries out the reaction L-seryl-[protein] + ATP = O-phospho-L-seryl-[protein] + ADP + H(+). The catalysed reaction is L-threonyl-[protein] + ATP = O-phospho-L-threonyl-[protein] + ADP + H(+). Its function is as follows. Suppresses the mitotic cell cycle in oocytes, forcing them to undergo meiosis II to produce haploid gametes. Acts as a MAPK kinase kinase (MAP3K) that acts upstream of MAP kinase in oocytes. This Patiria pectinifera (Starfish) protein is Serine/threonine-protein kinase mos.